Consider the following 287-residue polypeptide: 1-acyl-sn-glycerol-3-phosphate acyltransferase alpha (287 aa).

Residues 1 to 26 (MELWPGAGTLLLLLFLLLLLLLPTLW) form the signal peptide. The Lumenal segment spans residues 27–37 (FCSPSAKYFFK). A helical transmembrane segment spans residues 38–58 (MAFYNGWILFLAVLAIPVCAV). Residues 59 to 127 (RGRNVENMKI…PGHCVPIAKR (69 aa)) lie on the Cytoplasmic side of the membrane. The HXXXXD motif motif lies at 104 to 109 (HQSSLD). The helical transmembrane segment at 128–148 (ELLWAGSAGLACWLAGVIFID) threads the bilayer. Residues 149-192 (RKRTGDAISVMSEVAQTLLTQDVRVWVFPEGTRNHNGSMLPFKR) lie on the Lumenal side of the membrane. Positions 178–181 (EGTR) match the EGTR motif motif.

It belongs to the 1-acyl-sn-glycerol-3-phosphate acyltransferase family.

It is found in the endoplasmic reticulum membrane. It catalyses the reaction a 1-acyl-sn-glycero-3-phosphate + an acyl-CoA = a 1,2-diacyl-sn-glycero-3-phosphate + CoA. It carries out the reaction 1-(9Z-octadecenoyl)-sn-glycero-3-phosphate + (9Z)-octadecenoyl-CoA = 1,2-di-(9Z-octadecenoyl)-sn-glycero-3-phosphate + CoA. The enzyme catalyses 1-(9Z-octadecenoyl)-sn-glycero-3-phosphate + hexadecanoyl-CoA = 1-(9Z)-octadecenoyl-2-hexadecanoyl-sn-glycero-3-phosphate + CoA. The catalysed reaction is heptadecanoyl-CoA + 1-(9Z-octadecenoyl)-sn-glycero-3-phosphate = 1-(9Z)-octadecenoyl-2-heptadecanoyl-sn-glycero-3-phosphate + CoA. It catalyses the reaction 1-(9Z-octadecenoyl)-sn-glycero-3-phosphate + octadecanoyl-CoA = 1-(9Z-octadecenoyl)-2-octadecanoyl-sn-glycero-3-phosphate + CoA. It carries out the reaction 1-(9Z-octadecenoyl)-sn-glycero-3-phosphate + (9Z,12Z)-octadecadienoyl-CoA = 1-(9Z)-octadecenoyl-2-(9Z,12Z)-octadecadienoyl-sn-glycero-3-phosphate + CoA. The enzyme catalyses 1-(9Z-octadecenoyl)-sn-glycero-3-phosphate + tetradecanoyl-CoA = 1-(9Z)-octadecenoyl-2-tetradecanoyl-sn-glycero-3-phosphate + CoA. The catalysed reaction is pentadecanoyl-CoA + 1-(9Z-octadecenoyl)-sn-glycero-3-phosphate = 1-(9Z)-octadecenoyl-2-pentadecanoyl-sn-glycero-3-phosphate + CoA. It catalyses the reaction 1-hexadecanoyl-sn-glycero-3-phosphate + (9Z)-octadecenoyl-CoA = 1-hexadecanoyl-2-(9Z-octadecenoyl)-sn-glycero-3-phosphate + CoA. It carries out the reaction 1-(9Z,12Z,15Z)-octadecatrienoyl-sn-glycero-3-phosphate + (9Z)-octadecenoyl-CoA = 1-(9Z,12Z,15Z)-octadecatrienoyl-2-(9Z)-octadecenoyl-sn-glycero-3-phosphate + CoA. The enzyme catalyses 1-(6Z,9Z,12Z-octadecatrienoyl)-sn-glycero-3-phosphate + (9Z)-octadecenoyl-CoA = (6Z,9Z,12Z)-octadecatrienoyl-2-(9Z)-octadecenoyl-sn-glycero-3-phosphate + CoA. The catalysed reaction is 1-eicosanoyl-sn-glycero-3-phosphate + (9Z)-octadecenoyl-CoA = 1-eicosanoyl-2-(9Z)-octadecenoyl-sn-glycero-3-phosphate + CoA. It catalyses the reaction 1-tetradecanoyl-sn-glycerol 3-phosphate + (9Z)-octadecenoyl-CoA = 1-tetradecanoyl-2-(9Z)-octadecenoyl-sn-glycero-3-phosphate + CoA. It carries out the reaction 1-(9Z-octadecenoyl)-sn-glycero-3-phosphate + (5Z,8Z,11Z,14Z)-eicosatetraenoyl-CoA = 1-(9Z)-octadecenoyl-2-(5Z,8Z,11Z,14Z)-eicosatetraenoyl-sn-glycero-3-phosphate + CoA. The enzyme catalyses 1-(9Z-octadecenoyl)-sn-glycero-3-phosphate + dodecanoyl-CoA = 1-(9Z)-octadecenoyl-2-dodecanoyl-sn-glycero-3-phosphate + CoA. The catalysed reaction is (6Z)-octadecenoyl-CoA + 1-(9Z-octadecenoyl)-sn-glycero-3-phosphate = 1-(9Z)-octadecenoyl-2-(6Z)-octadecenoyl-sn-glycero-3-phosphate + CoA. It catalyses the reaction (11Z)-octadecenoyl-CoA + 1-(9Z-octadecenoyl)-sn-glycero-3-phosphate = 1-(9Z)-octadecenoyl-2-(11Z)-octadecenoyl-sn-glycero-3-phosphate + CoA. It carries out the reaction (9Z)-hexadecenoyl-CoA + 1-(9Z-octadecenoyl)-sn-glycero-3-phosphate = 1-(9Z-octadecenoyl)-2-(9Z-hexadecenoyl)-sn-glycero-3-phosphate + CoA. It functions in the pathway phospholipid metabolism; CDP-diacylglycerol biosynthesis; CDP-diacylglycerol from sn-glycerol 3-phosphate: step 2/3. Functionally, converts 1-acyl-sn-glycerol-3-phosphate (lysophosphatidic acid or LPA) into 1,2-diacyl-sn-glycerol-3-phosphate (phosphatidic acid or PA) by incorporating an acyl moiety at the sn-2 position of the glycerol backbone. In Ovis aries (Sheep), this protein is 1-acyl-sn-glycerol-3-phosphate acyltransferase alpha (AGPAT1).